The sequence spans 317 residues: Melanocyte-stimulating hormone receptor (317 aa).

At 1-37 (MPVQGSLRSLVGAVNSTPTASPHLRPATNQTEPQCLE) the chain is on the extracellular side. An N-linked (GlcNAc...) asparagine glycan is attached at Asn29. The helical transmembrane segment at 38–63 (VSVPVGLFLCLGLVSLVENTLVVAVI) threads the bilayer. The Cytoplasmic portion of the chain corresponds to 64-72 (AKNRNLHSP). The helical transmembrane segment at 73-93 (MYCFICCLALSDLLVSVSNVL) threads the bilayer. The Extracellular segment spans residues 94-118 (KTAVLLLLEAGALAAQATVVQQLGN). Residues 119–140 (VINMLICSSMVSSLCFLGAIAM) traverse the membrane as a helical segment. The Cytoplasmic portion of the chain corresponds to 141–163 (DRYISIFYALRYHSIVTLARARR). A helical transmembrane segment spans residues 164–183 (AIAAVWVASILSSILFFTYY). At 184 to 191 (DRTAALLC) the chain is on the extracellular side. A helical membrane pass occupies residues 192-211 (LVVFFLAMLVLMAVLYVHML). Over 212-240 (TQACQHAQGIARLHKRQHPVQQGWGLKGA) the chain is Cytoplasmic. The chain crosses the membrane as a helical span at residues 241-266 (ATLAVLLGVFFLCWGPLFLHLTLIAV). Residues 267 to 279 (CPQHPTCNCIVKN) are Extracellular-facing. Residues 280–300 (FKLFLALIICNAIVDPLIYAF) form a helical membrane-spanning segment. The Cytoplasmic segment spans residues 301–317 (RSQELRKTLKEVLLFSW).

The protein belongs to the G-protein coupled receptor 1 family. As to quaternary structure, interacts with MGRN1, but does not undergo MGRN1-mediated ubiquitination; this interaction competes with GNAS-binding and thus inhibits agonist-induced cAMP production. Interacts with OPN3; the interaction results in a decrease in MC1R-mediated cAMP signaling and ultimately a decrease in melanin production in melanocytes.

It is found in the cell membrane. Receptor for MSH (alpha, beta and gamma) and ACTH. The activity of this receptor is mediated by G proteins which activate adenylate cyclase. Mediates melanogenesis, the production of eumelanin (black/brown) and phaeomelanin (red/yellow), via regulation of cAMP signaling in melanocytes. The protein is Melanocyte-stimulating hormone receptor (MC1R) of Varecia rubra (Red ruffed lemur).